A 325-amino-acid polypeptide reads, in one-letter code: NADH-quinone oxidoreductase subunit H (325 aa).

The next 8 helical transmembrane spans lie at 11-31 (VIIAVVKALVILFVVVGCGAF), 81-101 (VIFTLAPMIAFTSLLLAMAIV), 114-134 (IGLLFFLMMAGLAVYAVLFAG), 154-174 (LSYEVFLGLSLMGVVAQAGSF), 186-206 (LWNVIPQFLGFLTFCIAGVAV), 237-257 (FFVGEYVGIVTVSALIVTLFF), 265-285 (LPPVIWFALKTAFFMMMFILI), and 304-324 (VCLPLTLLNLLATAAVILYTA).

This sequence belongs to the complex I subunit 1 family. As to quaternary structure, NDH-1 is composed of 13 different subunits. Subunits NuoA, H, J, K, L, M, N constitute the membrane sector of the complex.

The protein localises to the cell inner membrane. The catalysed reaction is a quinone + NADH + 5 H(+)(in) = a quinol + NAD(+) + 4 H(+)(out). Its function is as follows. NDH-1 shuttles electrons from NADH, via FMN and iron-sulfur (Fe-S) centers, to quinones in the respiratory chain. The immediate electron acceptor for the enzyme in this species is believed to be ubiquinone. Couples the redox reaction to proton translocation (for every two electrons transferred, four hydrogen ions are translocated across the cytoplasmic membrane), and thus conserves the redox energy in a proton gradient. This subunit may bind ubiquinone. This is NADH-quinone oxidoreductase subunit H from Erwinia tasmaniensis (strain DSM 17950 / CFBP 7177 / CIP 109463 / NCPPB 4357 / Et1/99).